The primary structure comprises 555 residues: Chaperonin GroEL (555 aa).

ATP-binding positions include 29-32 (TLGP), Lys-50, 86-90 (DGTTT), Gly-418, and Asp-499. The segment at 528–555 (HEEDNNTGNRSGGGVGGGHHGGMGGMDF) is disordered. Residues 537–555 (RSGGGVGGGHHGGMGGMDF) are compositionally biased toward gly residues.

The protein belongs to the chaperonin (HSP60) family. As to quaternary structure, forms a cylinder of 14 subunits composed of two heptameric rings stacked back-to-back. Interacts with the co-chaperonin GroES.

It localises to the cytoplasm. The catalysed reaction is ATP + H2O + a folded polypeptide = ADP + phosphate + an unfolded polypeptide.. In terms of biological role, together with its co-chaperonin GroES, plays an essential role in assisting protein folding. The GroEL-GroES system forms a nano-cage that allows encapsulation of the non-native substrate proteins and provides a physical environment optimized to promote and accelerate protein folding. This is Chaperonin GroEL from Orientia tsutsugamushi (strain Ikeda) (Rickettsia tsutsugamushi).